Reading from the N-terminus, the 219-residue chain is HTH-type transcriptional activator FasR (219 aa).

Residues 1–30 form a disordered region; it reads MSDLANTAERRGEKRPAGGNRRGNRLPRDE. The 61-residue stretch at 29–89 folds into the HTH tetR-type domain; it reads DERRGQLLIA…AVLQRHVDNL (61 aa). Residues 52 to 71 constitute a DNA-binding region (H-T-H motif); sequence GMDEIADRAGVSKPVLYQHF.

As to quaternary structure, homodimer.

With respect to regulation, fasR:DNA binding is regulated by long-chain acyl-CoAs (C14- to C26-CoA), which act as effector molecules that modulate the affinity of FasR for its DNA binding sequences and therefore modulate the expression of the essential fas-acpS operon. Its function is as follows. Transcriptional activator that plays a central role in sensing mycobacterial long-chain fatty acids and regulating lipid biosynthesis. Activates the expression of the genes encoding the fatty acid synthase (fas) and the 4-phosphopantetheinyl transferase (acpS), whose products are involved in the fatty acid and mycolic acid biosynthesis. Specifically binds to three conserved operator sequences present in the fas-acpS promoter region. Essential for M.smegmatis viability. In Mycolicibacterium smegmatis (strain ATCC 700084 / mc(2)155) (Mycobacterium smegmatis), this protein is HTH-type transcriptional activator FasR.